We begin with the raw amino-acid sequence, 166 residues long: Lymphocyte antigen 6G6e (166 aa).

An N-terminal signal peptide occupies residues Met1–Gly18. The UPAR/Ly6 domain maps to Leu28 to Leu151. 4 cysteine pairs are disulfide-bonded: Cys30–Cys52, Cys33–Cys39, Cys110–Cys129, and Cys130–Cys135.

In terms of assembly, interacts with CHRNA4. In terms of processing, O-glycosylated. Contains sialic acid residues.

The protein resides in the cell surface. It localises to the cell membrane. The protein localises to the cell projection. Functionally, believed to act as a modulator of nicotinic acetylcholine receptors (nAChRs) activity. In vitro potentiates alpha-3:beta-4-containing nAChRs maximum response by increasing peak current and slowing down receptor desensitization; the activity is dependent on its cell surface localization. The sequence is that of Lymphocyte antigen 6G6e (Ly6g6e) from Mus musculus (Mouse).